The primary structure comprises 308 residues: tRNA dimethylallyltransferase (308 aa).

10-17 (GPTASGKT) lines the ATP pocket. Substrate is bound at residue 12–17 (TASGKT). Interaction with substrate tRNA regions lie at residues 35–38 (DSSL) and 159–163 (QRIFR).

Belongs to the IPP transferase family. Monomer. It depends on Mg(2+) as a cofactor.

It carries out the reaction adenosine(37) in tRNA + dimethylallyl diphosphate = N(6)-dimethylallyladenosine(37) in tRNA + diphosphate. Functionally, catalyzes the transfer of a dimethylallyl group onto the adenine at position 37 in tRNAs that read codons beginning with uridine, leading to the formation of N6-(dimethylallyl)adenosine (i(6)A). This Francisella tularensis subsp. novicida (strain U112) protein is tRNA dimethylallyltransferase.